Consider the following 122-residue polypeptide: Large ribosomal subunit protein bL19 (122 aa).

Belongs to the bacterial ribosomal protein bL19 family.

This protein is located at the 30S-50S ribosomal subunit interface and may play a role in the structure and function of the aminoacyl-tRNA binding site. In Mycoplasmoides gallisepticum (strain R(low / passage 15 / clone 2)) (Mycoplasma gallisepticum), this protein is Large ribosomal subunit protein bL19.